A 504-amino-acid chain; its full sequence is Amidophosphoribosyltransferase (504 aa).

Catalysis depends on Cys2, which acts as the Nucleophile. One can recognise a Glutamine amidotransferase type-2 domain in the interval 2 to 235 (CGIVGIVSQS…PGEAIYVTFE (234 aa)). Mg(2+)-binding residues include Thr305, Asp367, and Asp368.

The protein in the C-terminal section; belongs to the purine/pyrimidine phosphoribosyltransferase family. Mg(2+) serves as cofactor.

It catalyses the reaction 5-phospho-beta-D-ribosylamine + L-glutamate + diphosphate = 5-phospho-alpha-D-ribose 1-diphosphate + L-glutamine + H2O. The protein operates within purine metabolism; IMP biosynthesis via de novo pathway; N(1)-(5-phospho-D-ribosyl)glycinamide from 5-phospho-alpha-D-ribose 1-diphosphate: step 1/2. Catalyzes the formation of phosphoribosylamine from phosphoribosylpyrophosphate (PRPP) and glutamine. The chain is Amidophosphoribosyltransferase from Pasteurella multocida (strain Pm70).